A 187-amino-acid chain; its full sequence is Phosphatidylethanolamine-binding protein 1 (187 aa).

Residues serine 6 and serine 13 each carry the phosphoserine modification. At threonine 42 the chain carries Phosphothreonine. 2 positions are modified to phosphoserine: serine 52 and serine 98. Positions 93–134 are interaction with RAF1; it reads KGGNISSGTVLSDYVGSGPPKGTGLHRYVWLVYEQDGPLKCD.

The protein belongs to the phosphatidylethanolamine-binding protein family. As to quaternary structure, has a tendency to form dimers by disulfide cross-linking. Interacts with RAF1 and this interaction is enhanced if RAF1 is phosphorylated on residues 'Ser-338', 'Ser-339', 'Tyr-340' and 'Tyr-341'. Interacts with ALOX15; in response to IL13/interleukin-13, prevents the interaction of PEBP1 with RAF1 to activate the ERK signaling cascade.

The protein resides in the cytoplasm. Functionally, binds ATP, opioids and phosphatidylethanolamine. Has lower affinity for phosphatidylinositol and phosphatidylcholine. Serine protease inhibitor which inhibits thrombin, neuropsin and chymotrypsin but not trypsin, tissue type plasminogen activator and elastase. Inhibits the kinase activity of RAF1 by inhibiting its activation and by dissociating the RAF1/MEK complex and acting as a competitive inhibitor of MEK phosphorylation. HCNP may be involved in the function of the presynaptic cholinergic neurons of the central nervous system. HCNP increases the production of choline acetyltransferase but not acetylcholinesterase. Seems to be mediated by a specific receptor. The chain is Phosphatidylethanolamine-binding protein 1 (PEBP1) from Oryctolagus cuniculus (Rabbit).